The chain runs to 49 residues: MRQNIILECVETGERLYLTSKNKRNNPERIELKKYSPKLRRRAIFKEVK.

This sequence belongs to the bacterial ribosomal protein bL33 family.

The chain is Large ribosomal subunit protein bL33A (rpmG1) from Enterococcus faecalis (strain ATCC 700802 / V583).